Reading from the N-terminus, the 445-residue chain is Tubulin beta-1 chain (445 aa).

Positions 1 to 4 (MREI) match the MREI motif motif. Residues Gln11, Glu69, Ser138, Gly142, Thr143, Gly144, Asn204, and Asn226 each coordinate GTP. Residue Glu69 coordinates Mg(2+). A disordered region spans residues 424–445 (QYQDATADEQGEFEEEGEEDEA). A compositionally biased stretch (acidic residues) spans 429–445 (TADEQGEFEEEGEEDEA). Glu438 carries the post-translational modification 5-glutamyl polyglutamate.

Belongs to the tubulin family. In terms of assembly, dimer of alpha and beta chains. A typical microtubule is a hollow water-filled tube with an outer diameter of 25 nm and an inner diameter of 15 nM. Alpha-beta heterodimers associate head-to-tail to form protofilaments running lengthwise along the microtubule wall with the beta-tubulin subunit facing the microtubule plus end conferring a structural polarity. Microtubules usually have 13 protofilaments but different protofilament numbers can be found in some organisms and specialized cells. Mg(2+) serves as cofactor. Some glutamate residues at the C-terminus are polyglycylated, resulting in polyglycine chains on the gamma-carboxyl group. Glycylation is mainly limited to tubulin incorporated into axonemes (cilia and flagella) whereas glutamylation is prevalent in neuronal cells, centrioles, axonemes, and the mitotic spindle. Both modifications can coexist on the same protein on adjacent residues, and lowering polyglycylation levels increases polyglutamylation, and reciprocally. The precise function of polyglycylation is still unclear. In terms of processing, some glutamate residues at the C-terminus are polyglutamylated, resulting in polyglutamate chains on the gamma-carboxyl group. Polyglutamylation plays a key role in microtubule severing by spastin (SPAST). SPAST preferentially recognizes and acts on microtubules decorated with short polyglutamate tails: severing activity by SPAST increases as the number of glutamates per tubulin rises from one to eight, but decreases beyond this glutamylation threshold. In terms of tissue distribution, highly expressed in skeletal muscle.

The protein localises to the cytoplasm. Its subcellular location is the cytoskeleton. Functionally, tubulin is the major constituent of microtubules, a cylinder consisting of laterally associated linear protofilaments composed of alpha- and beta-tubulin heterodimers. Microtubules grow by the addition of GTP-tubulin dimers to the microtubule end, where a stabilizing cap forms. Below the cap, tubulin dimers are in GDP-bound state, owing to GTPase activity of alpha-tubulin. The sequence is that of Tubulin beta-1 chain from Gallus gallus (Chicken).